Consider the following 669-residue polypeptide: Epithelial sodium channel subunit gamma (669 aa).

At 1–67 (MAPPYHGDTR…VVSRGRLRKF (67 aa)) the chain is on the cytoplasmic side. Residues 68 to 88 (IWILLTLSAVGLILWQCAELI) traverse the membrane as a helical segment. The Extracellular segment spans residues 89–551 (MSYYTASVSV…VILLSNFGGQ (463 aa)). 8 disulfide bridges follow: Cys-113–Cys-300, Cys-223–Cys-231, Cys-277–Cys-284, Cys-389–Cys-474, Cys-411–Cys-470, Cys-415–Cys-466, Cys-424–Cys-451, and Cys-426–Cys-440. The chain crosses the membrane as a helical span at residues 552–572 (LGLWMSCSMVCVIEIIEVFFI). The Cytoplasmic segment spans residues 573-669 (DSFSIVMRRR…LPDTLEGRSH (97 aa)). The interval 592-619 (DRKAPRPQEPPQVNAPAKEGHDNPVCTD) is disordered.

Belongs to the amiloride-sensitive sodium channel (TC 1.A.6) family. SCNN1G subfamily. As to quaternary structure, component of the heterotrimeric epithelial sodium channel (ENaC) composed of an alpha/SCNN1A, a beta/SCNN1B and a gamma/SCNN1G subunit.

It localises to the apical cell membrane. It catalyses the reaction Na(+)(in) = Na(+)(out). Its activity is regulated as follows. Originally identified and characterized by its inhibition by the diuretic drug amiloride. Its function is as follows. This is one of the three pore-forming subunits of the heterotrimeric epithelial sodium channel (ENaC), a critical regulator of sodium balance and fluid homeostasis. ENaC operates in epithelial tissues, where it mediates the electrodiffusion of sodium ions from extracellular fluid through the apical membrane of cells, with water following osmotically. The protein is Epithelial sodium channel subunit gamma of Pelodiscus sinensis (Chinese softshell turtle).